The following is a 495-amino-acid chain: Protein FAM83F (495 aa).

The residue at position 2 (Ala-2) is an N-acetylalanine. Residues Ala-2 to Leu-294 form a DUF1669 region. The residue at position 4 (Ser-4) is a Phosphoserine. 2 disordered regions span residues Gln-341–Ala-362 and Pro-384–Ser-495. The span at Pro-447–Ser-458 shows a compositional bias: low complexity. Position 477 is a phosphoserine (Ser-477).

The protein belongs to the FAM83 family. Directly interacts (via DUF1669) with CSNK1A1 and CSNK1A1L.

It localises to the cell membrane. The chain is Protein FAM83F (Fam83f) from Mus musculus (Mouse).